The chain runs to 303 residues: CDAN1-interacting nuclease 1 (303 aa).

It localises to the nucleus. It is found in the cytoplasm. In terms of biological role, may play a role in erythroid cell differentiation. This is CDAN1-interacting nuclease 1 from Xenopus laevis (African clawed frog).